The sequence spans 373 residues: Beta sliding clamp homolog GriR (373 aa).

It belongs to the beta sliding clamp family. In terms of assembly, forms a ring-shaped head-to-tail homodimer around DNA which binds and tethers DNA polymerases and other proteins to the DNA. The DNA replisome complex has a single clamp-loading complex (3 tau and 1 each of delta, delta', psi and chi subunits) which binds 3 Pol III cores (1 core on the leading strand and 2 on the lagging strand) each with a beta sliding clamp dimer. Additional proteins in the replisome are other copies of gamma, psi and chi, Ssb, DNA helicase and RNA primase.

The protein localises to the cytoplasm. Functionally, a homolog of the beta sliding clamp protein encoded within the biosynthetic cluster for griselimycin synthesis. Upon expression in S.coelicolor A3(2), which is susceptible to this antibiotic, confers resistance to griselimycin. The beta sliding clamp confers DNA tethering and processivity to DNA polymerases and other proteins. Acts as a clamp, forming a ring around DNA (a reaction catalyzed by the clamp-loading complex) which diffuses in an ATP-independent manner freely and bidirectionally along dsDNA. Initially characterized for its ability to contact the catalytic subunit of DNA polymerase III (Pol III), a complex, multichain enzyme responsible for most of the replicative synthesis in bacteria; Pol III exhibits 3'-5' exonuclease proofreading activity. The beta chain is required for initiation of replication as well as for processivity of DNA replication. This chain is Beta sliding clamp homolog GriR, found in Streptomyces muensis.